Reading from the N-terminus, the 458-residue chain is Exodeoxyribonuclease 7 large subunit (458 aa).

The protein belongs to the XseA family. Heterooligomer composed of large and small subunits.

The protein localises to the cytoplasm. It catalyses the reaction Exonucleolytic cleavage in either 5'- to 3'- or 3'- to 5'-direction to yield nucleoside 5'-phosphates.. In terms of biological role, bidirectionally degrades single-stranded DNA into large acid-insoluble oligonucleotides, which are then degraded further into small acid-soluble oligonucleotides. The sequence is that of Exodeoxyribonuclease 7 large subunit from Shouchella clausii (strain KSM-K16) (Alkalihalobacillus clausii).